We begin with the raw amino-acid sequence, 309 residues long: Olfactory receptor 5AK2 (309 aa).

At 1 to 25 (MTLGNSTEVTEFYLLGFGAQHEFWC) the chain is on the extracellular side. N-linked (GlcNAc...) asparagine glycosylation is present at Asn-5. A helical membrane pass occupies residues 26–46 (ILFIVFLLIYVTSIMGNSGII). The Cytoplasmic portion of the chain corresponds to 47 to 54 (LLINTDSR). Residues 55–75 (FQTLTYFFLQHLAFVDICYTS) traverse the membrane as a helical segment. The Extracellular portion of the chain corresponds to 76–99 (AITPKMLQSFTEEKNLMLFQGCVI). Cysteines 97 and 189 form a disulfide. Residues 100–120 (QFLVYATFATSDCYLLAMMAV) form a helical membrane-spanning segment. Over 121–133 (DPYVAICKPLHYT) the chain is Cytoplasmic. Residues 134–154 (VIMSRTVCIRLVAGSYIMGSI) traverse the membrane as a helical segment. N-linked (GlcNAc...) asparagine glycosylation is present at Asn-155. The Extracellular portion of the chain corresponds to 155–196 (NASVQTGFTCSLSFCKSNSINHFFCDVPPILALSCSNVDINI). The chain crosses the membrane as a helical span at residues 197 to 217 (MLLVVFVGSNLIFTGLVVIFS). Topologically, residues 218–237 (YIYIMATILKMSSSAGRKKS) are cytoplasmic. A helical transmembrane segment spans residues 238 to 258 (FSTCASHLTAVTIFYGTLSYM). Residues 259–271 (YLQSHSNNSQENM) lie on the Extracellular side of the membrane. Asn-265 carries an N-linked (GlcNAc...) asparagine glycan. A helical transmembrane segment spans residues 272–292 (KVAFIFYGTVIPMLNPLIYSL). Topologically, residues 293–309 (RNKEVKEALKVIGKKLF) are cytoplasmic.

It belongs to the G-protein coupled receptor 1 family.

The protein localises to the cell membrane. In terms of biological role, odorant receptor. This chain is Olfactory receptor 5AK2 (OR5AK2), found in Homo sapiens (Human).